The primary structure comprises 389 residues: Major outer membrane porin (389 aa).

The N-terminal stretch at 1–22 is a signal peptide; sequence MKKLLKSALLFAATGSALSLQA.

It belongs to the chlamydial porin (CP) (TC 1.B.2) family. In terms of assembly, part of a disulfide cross-linked outer membrane complex (COMC) composed of the major outer membrane porin (MOMP), the small cysteine-rich protein (OmcA) and the large cysteine-rich periplasmic protein (OmcB).

It localises to the cell outer membrane. Functionally, in elementary bodies (EBs, the infectious stage, which is able to survive outside the host cell) provides the structural integrity of the outer envelope through disulfide cross-links with the small cysteine-rich protein and the large cysteine-rich periplasmic protein. It has been described in publications as the Sarkosyl-insoluble COMC (Chlamydia outer membrane complex), and serves as the functional equivalent of peptidoglycan. Its function is as follows. Permits diffusion of specific solutes through the outer membrane. The chain is Major outer membrane porin (ompA) from Chlamydia abortus (strain DSM 27085 / S26/3) (Chlamydophila abortus).